Consider the following 371-residue polypeptide: uncharacterized protein (371 aa).

This sequence belongs to the Gfo/Idh/MocA family.

This is an uncharacterized protein from Synechocystis sp. (strain ATCC 27184 / PCC 6803 / Kazusa).